A 301-amino-acid chain; its full sequence is Ribosomal protein L11 methyltransferase (301 aa).

S-adenosyl-L-methionine contacts are provided by T146, G167, D189, and N237.

Belongs to the methyltransferase superfamily. PrmA family.

It is found in the cytoplasm. It catalyses the reaction L-lysyl-[protein] + 3 S-adenosyl-L-methionine = N(6),N(6),N(6)-trimethyl-L-lysyl-[protein] + 3 S-adenosyl-L-homocysteine + 3 H(+). In terms of biological role, methylates ribosomal protein L11. This Prochlorococcus marinus (strain MIT 9313) protein is Ribosomal protein L11 methyltransferase.